The sequence spans 65 residues: MKILYLLFAFLFLAFLSEPGNAYKRCHIKGGHCFPKEKICIPPSSDFGKMDCPWRRKCCKKGSGK.

Residues 1–22 (MKILYLLFAFLFLAFLSEPGNA) form the signal peptide. Intrachain disulfides connect Cys-26–Cys-58, Cys-33–Cys-52, and Cys-40–Cys-59.

It belongs to the crotamine-myotoxin family. Monomer. As to expression, expressed by the venom gland.

Its subcellular location is the secreted. In terms of biological role, cationic peptide that possesses multiple functions. It acts as a cell-penetrating peptide (CPP), and as a potent voltage-gated potassium channel (Kv) inhibitor. It exhibits antimicrobial activities, hind limb paralysis, and severe muscle necrosis by a non-enzymatic mechanism. The chain is Myotoxin-1 from Crotalus durissus terrificus (South American rattlesnake).